A 98-amino-acid chain; its full sequence is MKTISEIKDILRKHKKILKEKYKVKSIAIFGSYARNEQTEKSDIDILVEFYETPDYLKFFELEDYLSDLLGIKVDLVIKGAIKNPYIKKSIEEDLIYV.

Positions 31-45 (GSYARNEQTEKSDID) match the GSX(10)DXD motif motif. 3 residues coordinate Mg(2+): D43, D45, and D75.

It belongs to the MntA antitoxin family. Probably forms a complex with cognate toxin MJ0127. Requires Mg(2+) as cofactor.

It carries out the reaction L-tyrosyl-[protein] + ATP = O-(5'-adenylyl)-L-tyrosyl-[protein] + diphosphate. The catalysed reaction is O-(5'-adenylyl)-L-tyrosyl-[protein] + ATP = O-[5'-(adenylyl-(5'-&gt;3')-adenylyl)]-L-tyrosyl-[protein] + diphosphate. Probable antitoxin component of a putative type VII toxin-antitoxin (TA) system. Neutralizes cognate toxic MJ0127 by di-AMPylation. The protein is Putative protein adenylyltransferase MJ0128 of Methanocaldococcus jannaschii (strain ATCC 43067 / DSM 2661 / JAL-1 / JCM 10045 / NBRC 100440) (Methanococcus jannaschii).